Reading from the N-terminus, the 471-residue chain is MITPIIMAGGNGSRLWPLSRTLYPKQFLCLDGSQSMLQTTITRINNLNASDPIVICNEQHRFIVAEQLKELSKSSGDIILEPVGRNTAPAVALAALKCLKKNALLLVLAADHIIKDEETFCKTIQDARKYAEAGKLVTFGIVPTMPETGYGYIRRGQALFSAENDCSLAFRVAEFVEKPNLETAQSYLDSGEYYWNSGMFLFRADRYIEELKIRPDIYKACSLAMESAVTDLDFIRVDEDSFCACPDESIDYAVMEKTNDAVVVPLNAGWSDVGSWSSLWEISDKDSNGNVTKGDVLSHNADNCYLHAETGLVTAVGVKDLIVVQTKDAVLVANTNCVQDVKKIVEKIKLENRHEHITHREVYRPWGKYDSIDFGERYQVKRITVKPGEGISEQQHYHRAEHWIIVAGTAKITIKGEVKILTENESVYIPVGVKHCLENPGKIALELIEVRSGAYLGEDDIVRFSDKYGRN.

It belongs to the mannose-6-phosphate isomerase type 2 family.

The enzyme catalyses alpha-D-mannose 1-phosphate + GTP + H(+) = GDP-alpha-D-mannose + diphosphate. It functions in the pathway nucleotide-sugar biosynthesis; GDP-alpha-D-mannose biosynthesis; GDP-alpha-D-mannose from alpha-D-mannose 1-phosphate (GTP route): step 1/1. In terms of biological role, involved in GDP-mannose biosynthesis which serves as the activated sugar nucleotide precursor for mannose residues in cell surface polysaccharides. This enzyme participates in synthesis of the LPS O antigen. The sequence is that of Mannose-1-phosphate guanylyltransferase (manC) from Salmonella montevideo.